Here is a 422-residue protein sequence, read N- to C-terminus: uncharacterized protein (422 aa).

The RRM domain maps to 5–83; that stretch reads CVVYVGNIPY…RRLRVDFPTA (79 aa). The tract at residues 337 to 358 is disordered; the sequence is RSSSIPSSGSIRSPSLTTTSAQ.

It localises to the nucleus. This is an uncharacterized protein from Schizosaccharomyces pombe (strain 972 / ATCC 24843) (Fission yeast).